The chain runs to 471 residues: Intraflagellar transport protein 46 homolog (471 aa).

Disordered regions lie at residues 1-202 (MSSE…SNMR) and 226-246 (SRLEDDSSNDDDDDDDDEDDD). 2 stretches are compositionally biased toward acidic residues: residues 89–99 (SEPQEVIDVND) and 231–246 (DSSNDDDDDDDDEDDD).

It belongs to the IFT46 family. Component of the IFT complex B composed of at least che-2, che-13, dyf-1, dyf-3, dyf-6, dyf-11, dyf-13, ift-20, ift-74, ift-81, ifta-2, osm-1, osm-5 and osm-6. As to expression, expressed in the hypodermis and sensory neurons including inner labial, PDE, amphid and phasmid neurons.

Its subcellular location is the cell projection. It localises to the cilium. The protein resides in the cytoplasm. It is found in the cytoskeleton. The protein localises to the cilium basal body. Its subcellular location is the dendrite. It localises to the perikaryon. In terms of biological role, component of the intraflagellar transport (IFT) complex B required for transport of proteins in the motile cilium. May be required for ciliary entrance and transport of specific ciliary cargo proteins such as che-3 which are related to motility. Required for normal morphology and function of ciliated amphid sensory neurons. In Caenorhabditis elegans, this protein is Intraflagellar transport protein 46 homolog.